A 182-amino-acid polypeptide reads, in one-letter code: CASP-like protein 5A1 (182 aa).

Residues 1-47 lie on the Cytoplasmic side of the membrane; sequence MEMASHPAVHPVALPPPYQAVGPPAPPAVRINDFPGSPGTLMGLALR. The helical transmembrane segment at 48–68 threads the bilayer; that stretch reads FAQLGFALTALCIMVSIVGFS. Over 69 to 72 the chain is Extracellular; sequence SVTA. A helical transmembrane segment spans residues 73–93; sequence FCFLVAAMVLQCIWSLCLGVL. Over 94–117 the chain is Cytoplasmic; that stretch reads DCYALLTKRSLRNSLILSFFVVGD. The chain crosses the membrane as a helical span at residues 118-138; sequence WITSTMTFAGACAAAGITVLI. Residues 139–158 lie on the Extracellular side of the membrane; sequence DNDLNQCGPNHCNRFEAAAA. A helical membrane pass occupies residues 159–179; sequence MAFMSWVITTISFFLSFWILV. Over 180 to 182 the chain is Cytoplasmic; the sequence is TCR.

This sequence belongs to the Casparian strip membrane proteins (CASP) family. As to quaternary structure, homodimer and heterodimers.

It is found in the cell membrane. The chain is CASP-like protein 5A1 from Physcomitrium patens (Spreading-leaved earth moss).